Here is a 320-residue protein sequence, read N- to C-terminus: rRNA methyltransferase 2, mitochondrial (320 aa).

A mitochondrion-targeting transit peptide spans 1–18; that stretch reads MILVYNRIRSIISSSLGR. Residues 83-86, Asp104, 178-179, and Asp203 each bind S-adenosyl-L-methionine; these read PGAW and DI. The active-site Proton acceptor is Lys264.

Belongs to the class I-like SAM-binding methyltransferase superfamily. RNA methyltransferase RlmE family.

It localises to the mitochondrion. It carries out the reaction uridine(2791) in 21S rRNA + S-adenosyl-L-methionine = 2'-O-methyluridine(2791) in 21S rRNA + S-adenosyl-L-homocysteine + H(+). Functionally, S-adenosyl-L-methionine-dependent 2'-O-ribose methyltransferase that catalyzes the formation of 2'-O-methyluridine at position 2791 (Um2791) in the 21S mitochondrial large subunit ribosomal RNA (mtLSU rRNA), a universally conserved modification in the peptidyl transferase domain of the mtLSU rRNA. This Saccharomyces cerevisiae (strain ATCC 204508 / S288c) (Baker's yeast) protein is rRNA methyltransferase 2, mitochondrial.